Here is a 276-residue protein sequence, read N- to C-terminus: tRNA dimethylallyltransferase (276 aa).

Residues 9–12 (DSLS) are interaction with substrate tRNA.

The protein belongs to the IPP transferase family. In terms of assembly, monomer. Requires Mg(2+) as cofactor.

It carries out the reaction adenosine(37) in tRNA + dimethylallyl diphosphate = N(6)-dimethylallyladenosine(37) in tRNA + diphosphate. Functionally, catalyzes the transfer of a dimethylallyl group onto the adenine at position 37 in tRNAs that read codons beginning with uridine, leading to the formation of N6-(dimethylallyl)adenosine (i(6)A). The sequence is that of tRNA dimethylallyltransferase (miaA) from Helicobacter pylori (strain G27).